A 74-amino-acid polypeptide reads, in one-letter code: Large ribosomal subunit protein bL31 (74 aa).

It belongs to the bacterial ribosomal protein bL31 family. Type A subfamily. Part of the 50S ribosomal subunit.

Functionally, binds the 23S rRNA. This is Large ribosomal subunit protein bL31 from Synechococcus sp. (strain JA-2-3B'a(2-13)) (Cyanobacteria bacterium Yellowstone B-Prime).